The sequence spans 120 residues: Dense granule protein 5 (120 aa).

The first 25 residues, 1–25 (MASVKRVVVAVMIVNVLALIFVGVA), serve as a signal peptide directing secretion. Residues 27-59 (STRDVGSGGDDSEGARGREQQQVQQHEQNEDRS) are disordered. Residues 76–93 (AVGLAAAVVAVVSLLRLL) traverse the membrane as a helical segment. Over residues 100–109 (AIQEESKESA) the composition is skewed to basic and acidic residues. The interval 100–120 (AIQEESKESATAEEEEVAEEE) is disordered. Acidic residues predominate over residues 110–120 (TAEEEEVAEEE).

The protein localises to the secreted. It localises to the parasitophorous vacuole lumen. The protein resides in the parasitophorous vacuole membrane. Its subcellular location is the cytoplasmic vesicle. It is found in the secretory vesicle. Its function is as follows. Plays a role in the function of the cyst and parasitophorous vacuole membranes and therefore in host-parasite interactions. The sequence is that of Dense granule protein 5 (GRA5) from Toxoplasma gondii.